The sequence spans 715 residues: Fatty acid oxidation complex subunit alpha (715 aa).

Residues 1–190 (MIYEGKAITV…KVSAVDAVVT (190 aa)) form an enoyl-CoA hydratase/isomerase region. Residue Asp-297 coordinates substrate. Positions 312–715 (KDVKQAAVLG…MAKNGQSFFG (404 aa)) are 3-hydroxyacyl-CoA dehydrogenase. Residues Met-325, Asp-344, 401–403 (VVE), Lys-408, and Ser-430 each bind NAD(+). His-451 acts as the For 3-hydroxyacyl-CoA dehydrogenase activity in catalysis. Residue Asn-454 participates in NAD(+) binding. 2 residues coordinate substrate: Asn-501 and Tyr-660.

This sequence in the N-terminal section; belongs to the enoyl-CoA hydratase/isomerase family. The protein in the C-terminal section; belongs to the 3-hydroxyacyl-CoA dehydrogenase family. Heterotetramer of two alpha chains (FadB) and two beta chains (FadA).

The catalysed reaction is a (3S)-3-hydroxyacyl-CoA + NAD(+) = a 3-oxoacyl-CoA + NADH + H(+). The enzyme catalyses a (3S)-3-hydroxyacyl-CoA = a (2E)-enoyl-CoA + H2O. It carries out the reaction a 4-saturated-(3S)-3-hydroxyacyl-CoA = a (3E)-enoyl-CoA + H2O. It catalyses the reaction (3S)-3-hydroxybutanoyl-CoA = (3R)-3-hydroxybutanoyl-CoA. The catalysed reaction is a (3Z)-enoyl-CoA = a 4-saturated (2E)-enoyl-CoA. The enzyme catalyses a (3E)-enoyl-CoA = a 4-saturated (2E)-enoyl-CoA. It functions in the pathway lipid metabolism; fatty acid beta-oxidation. In terms of biological role, involved in the aerobic and anaerobic degradation of long-chain fatty acids via beta-oxidation cycle. Catalyzes the formation of 3-oxoacyl-CoA from enoyl-CoA via L-3-hydroxyacyl-CoA. It can also use D-3-hydroxyacyl-CoA and cis-3-enoyl-CoA as substrate. The sequence is that of Fatty acid oxidation complex subunit alpha from Pseudomonas fragi.